Consider the following 110-residue polypeptide: NADH dehydrogenase [ubiquinone] iron-sulfur protein 6, mitochondrial (110 aa).

The transit peptide at 1–22 (MASNLLKALIRSQILPSSRRNF) directs the protein to the mitochondrion.

The protein belongs to the complex I NDUFS6 subunit family. Complex I is composed of at least 49 different subunits. This is a component of the iron-sulfur (IP) fragment of the enzyme.

The protein localises to the mitochondrion inner membrane. Its function is as follows. Accessory subunit of the mitochondrial membrane respiratory chain NADH dehydrogenase (Complex I), that is believed not to be involved in catalysis. Complex I functions in the transfer of electrons from NADH to the respiratory chain. The immediate electron acceptor for the enzyme is believed to be ubiquinone. The protein is NADH dehydrogenase [ubiquinone] iron-sulfur protein 6, mitochondrial of Arabidopsis thaliana (Mouse-ear cress).